Consider the following 396-residue polypeptide: Ribosomal RNA large subunit methyltransferase I (396 aa).

A PUA domain is found at 2–81; that stretch reads SVRLVLAKGR…ESIDIAFFSR (80 aa).

The protein belongs to the methyltransferase superfamily. RlmI family.

It is found in the cytoplasm. It catalyses the reaction cytidine(1962) in 23S rRNA + S-adenosyl-L-methionine = 5-methylcytidine(1962) in 23S rRNA + S-adenosyl-L-homocysteine + H(+). In terms of biological role, specifically methylates the cytosine at position 1962 (m5C1962) of 23S rRNA. The chain is Ribosomal RNA large subunit methyltransferase I from Shigella flexneri serotype 5b (strain 8401).